A 186-amino-acid polypeptide reads, in one-letter code: Ribosome rescue factor SmrB (186 aa).

Positions 99 to 174 (IDLHGLTQHQ…SDAAIIVIIE (76 aa)) constitute a Smr domain.

The protein belongs to the SmrB family. Associates with collided ribosomes, but not with correctly translating polysomes.

Acts as a ribosome collision sensor. Detects stalled/collided disomes (pairs of ribosomes where the leading ribosome is stalled and a second ribosome has collided with it) and endonucleolytically cleaves mRNA at the 5' boundary of the stalled ribosome. Stalled/collided disomes form a new interface (primarily via the 30S subunits) that binds SmrB. Cleaved mRNA becomes available for tmRNA ligation, leading to ribosomal subunit dissociation and rescue of stalled ribosomes. The chain is Ribosome rescue factor SmrB from Buchnera aphidicola subsp. Acyrthosiphon pisum (strain Tuc7).